Consider the following 312-residue polypeptide: Olfactory receptor 2M3 (312 aa).

The Extracellular segment spans residues 1–25; sequence MARENSTFNSDFILLGIFNHSPTHT. N5 carries an N-linked (GlcNAc...) asparagine glycan. A helical transmembrane segment spans residues 26–49; sequence FLFFLVLAIFSVAFMGNSVMVLLI. Residues 50 to 57 are Cytoplasmic-facing; sequence YLDTQLHT. A helical transmembrane segment spans residues 58–79; that stretch reads PMYLLLSQLSLMDLMLICTTVP. The Extracellular segment spans residues 80 to 100; the sequence is KMAFNYLSGSKSISMAGCATQ. A disulfide bond links C97 and C189. A helical transmembrane segment spans residues 101 to 120; it reads IFFYTSLLGSECFLLAVMAY. Topologically, residues 121-139 are cytoplasmic; it reads DRYTAICHPLRYTNLMSPK. Residues 140–158 traverse the membrane as a helical segment; it reads ICGLMTAFSWILGSTDGII. At 159-195 the chain is on the extracellular side; sequence DVVATFSFSYCGSREIAHFFCDFPSLLILSCSDTSIF. The helical transmembrane segment at 196–219 threads the bilayer; sequence EKILFICCIVMIVFPVAIIIASYA. Over 220 to 236 the chain is Cytoplasmic; it reads RVILAVIHMGSGEGRRK. The chain crosses the membrane as a helical span at residues 237–259; sequence AFTTCSSHLLVVGMYYGAALFMY. Residues 260-272 are Extracellular-facing; it reads IRPTSDRSPTQDK. Residues 273–292 traverse the membrane as a helical segment; it reads MVSVFYTILTPMLNPLIYSL. The Cytoplasmic portion of the chain corresponds to 293 to 312; sequence RNKEVTRAFMKILGKGKSGE.

It belongs to the G-protein coupled receptor 1 family.

It is found in the cell membrane. Its function is as follows. Odorant receptor. This is Olfactory receptor 2M3 (OR2M3) from Homo sapiens (Human).